The sequence spans 116 residues: UPF0102 protein LA_2381 (116 aa).

This sequence belongs to the UPF0102 family.

This Leptospira interrogans serogroup Icterohaemorrhagiae serovar Lai (strain 56601) protein is UPF0102 protein LA_2381.